We begin with the raw amino-acid sequence, 283 residues long: Thymidylate synthase (283 aa).

Residue R21 coordinates dUMP. Position 51 (H51) interacts with (6R)-5,10-methylene-5,6,7,8-tetrahydrofolate. 123 to 124 (RR) is a binding site for dUMP. C156 serves as the catalytic Nucleophile. Residues 185–188 (RSAD), N196, and 226–228 (HIY) contribute to the dUMP site. D188 provides a ligand contact to (6R)-5,10-methylene-5,6,7,8-tetrahydrofolate. A (6R)-5,10-methylene-5,6,7,8-tetrahydrofolate-binding site is contributed by A282.

It belongs to the thymidylate synthase family. Bacterial-type ThyA subfamily. As to quaternary structure, homodimer.

The protein resides in the cytoplasm. It carries out the reaction dUMP + (6R)-5,10-methylene-5,6,7,8-tetrahydrofolate = 7,8-dihydrofolate + dTMP. Its pathway is pyrimidine metabolism; dTTP biosynthesis. In terms of biological role, catalyzes the reductive methylation of 2'-deoxyuridine-5'-monophosphate (dUMP) to 2'-deoxythymidine-5'-monophosphate (dTMP) while utilizing 5,10-methylenetetrahydrofolate (mTHF) as the methyl donor and reductant in the reaction, yielding dihydrofolate (DHF) as a by-product. This enzymatic reaction provides an intracellular de novo source of dTMP, an essential precursor for DNA biosynthesis. The sequence is that of Thymidylate synthase from Flavobacterium johnsoniae (strain ATCC 17061 / DSM 2064 / JCM 8514 / BCRC 14874 / CCUG 350202 / NBRC 14942 / NCIMB 11054 / UW101) (Cytophaga johnsonae).